The chain runs to 213 residues: 5''-phosphoribostamycin phosphatase (213 aa).

His-8 acts as the Tele-phosphohistidine intermediate in catalysis. The active site involves His-155.

This sequence belongs to the histidine phosphatase superfamily.

The catalysed reaction is 5''-phosphoribostamycin + H2O = ribostamycin + phosphate. It participates in antibiotic biosynthesis; butirosin biosynthesis. In terms of biological role, catalyzes dephosphorylation of 5''-phosphoribostamycin to generate ribostamycinin the biosynthetic pathway of butirosin. This chain is 5''-phosphoribostamycin phosphatase (btrP), found in Niallia circulans (Bacillus circulans).